The primary structure comprises 312 residues: Olfactory receptor 4L1 (312 aa).

Residues 1-25 (MDLKNGSLVTEFILLGFFGRWELQI) lie on the Extracellular side of the membrane. The N-linked (GlcNAc...) asparagine glycan is linked to Asn5. The helical transmembrane segment at 26–49 (FFFVTFSLIYGATVMGNILIMVTV) threads the bilayer. The Cytoplasmic segment spans residues 50 to 57 (TCRSTLHS). The chain crosses the membrane as a helical span at residues 58–79 (PLYFLLGNLSFLDMCLSTATTP). Topologically, residues 80–100 (KMIIDLLTDHKTISVWGCVTQ) are extracellular. Cysteines 97 and 189 form a disulfide. The chain crosses the membrane as a helical span at residues 101–120 (MFFMHFFGGAEMTLLIIMAF). The Cytoplasmic segment spans residues 121 to 139 (DRYVAICKPLHYRTIMSHK). Residues 140–158 (LLKGFAILSWIIGFLHSIS) traverse the membrane as a helical segment. Over 159 to 195 (QIVLTMNLPFCGHNVINNIFCDLPLVIKLACIETYTL) the chain is Extracellular. A helical membrane pass occupies residues 196–219 (ELFVIADSGLLSFTCFILLLVSYI). The Cytoplasmic portion of the chain corresponds to 220–235 (VILVSVPKKSSHGLSK). A helical membrane pass occupies residues 236–258 (ALSTLSAHIIVVTLFFGPCIFIY). At 259–269 (VWPFSSLASNK) the chain is on the extracellular side. N-linked (GlcNAc...) asparagine glycosylation occurs at Asn268. The helical transmembrane segment at 270–289 (TLAVFYTVITPLLNPSIYTL) threads the bilayer. Over 290–312 (RNKKMQEAIRKLRFQYVSSAQNF) the chain is Cytoplasmic.

Belongs to the G-protein coupled receptor 1 family.

Its subcellular location is the cell membrane. In terms of biological role, odorant receptor. The protein is Olfactory receptor 4L1 (OR4L1) of Homo sapiens (Human).